We begin with the raw amino-acid sequence, 213 residues long: ATP synthase peripheral stalk subunit OSCP, mitochondrial (213 aa).

A mitochondrion-targeting transit peptide spans Met-1–Pro-23. An SIFI-degron motif is present at residues Ala-5–Pro-23. An N6-acetyllysine mark is found at Lys-54, Lys-60, Lys-70, and Lys-73. An N6-succinyllysine modification is found at Lys-90. Residues Lys-100, Lys-158, and Lys-162 each carry the N6-acetyllysine; alternate modification. N6-succinyllysine; alternate is present on residues Lys-100, Lys-158, and Lys-162. N6-acetyllysine occurs at positions 172, 176, and 192. Lys-199 carries the N6-succinyllysine modification.

It belongs to the ATPase delta chain family. As to quaternary structure, component of the ATP synthase complex composed at least of ATP5F1A/subunit alpha, ATP5F1B/subunit beta, ATP5MC1/subunit c (homooctomer), MT-ATP6/subunit a, MT-ATP8/subunit 8, ATP5ME/subunit e, ATP5MF/subunit f, ATP5MG/subunit g, ATP5MK/subunit k, ATP5MJ/subunit j, ATP5F1C/subunit gamma, ATP5F1D/subunit delta, ATP5F1E/subunit epsilon, ATP5PF/subunit F6, ATP5PB/subunit b, ATP5PD/subunit d, ATP5PO/subunit OSCP. ATP synthase complex consists of a soluble F(1) head domain (subunits alpha(3) and beta(3)) - the catalytic core - and a membrane F(0) domain - the membrane proton channel (subunits c, a, 8, e, f, g, k and j). These two domains are linked by a central stalk (subunits gamma, delta, and epsilon) rotating inside the F1 region and a stationary peripheral stalk (subunits F6, b, d, and OSCP). Acetylation at Lys-162 decreases ATP production. Deacetylated by SIRT3. In terms of processing, in response to mitochondrial stress, the precursor protein is ubiquitinated by the SIFI complex in the cytoplasm before mitochondrial import, leading to its degradation. Within the SIFI complex, UBR4 initiates ubiquitin chain that are further elongated or branched by KCMF1.

It is found in the mitochondrion. The protein localises to the mitochondrion inner membrane. Functionally, subunit OSCP, of the mitochondrial membrane ATP synthase complex (F(1)F(0) ATP synthase or Complex V) that produces ATP from ADP in the presence of a proton gradient across the membrane which is generated by electron transport complexes of the respiratory chain. ATP synthase complex consist of a soluble F(1) head domain - the catalytic core - and a membrane F(1) domain - the membrane proton channel. These two domains are linked by a central stalk rotating inside the F(1) region and a stationary peripheral stalk. During catalysis, ATP synthesis in the catalytic domain of F(1) is coupled via a rotary mechanism of the central stalk subunits to proton translocation. In vivo, can only synthesize ATP although its ATP hydrolase activity can be activated artificially in vitro. Part of the complex F(0) domain. Part of the complex F(0) domain and the peripheric stalk, which acts as a stator to hold the catalytic alpha(3)beta(3) subcomplex and subunit a/ATP6 static relative to the rotary elements. This chain is ATP synthase peripheral stalk subunit OSCP, mitochondrial, found in Bos taurus (Bovine).